A 313-amino-acid chain; its full sequence is tRNA dimethylallyltransferase (313 aa).

Position 11 to 18 (11 to 18 (GPTAAGKS)) interacts with ATP. 13–18 (TAAGKS) is a binding site for substrate. 3 interaction with substrate tRNA regions span residues 36–39 (DSAT), 160–164 (QRIQR), and 244–249 (RCVGYR).

It belongs to the IPP transferase family. In terms of assembly, monomer. Mg(2+) is required as a cofactor.

The catalysed reaction is adenosine(37) in tRNA + dimethylallyl diphosphate = N(6)-dimethylallyladenosine(37) in tRNA + diphosphate. Its function is as follows. Catalyzes the transfer of a dimethylallyl group onto the adenine at position 37 in tRNAs that read codons beginning with uridine, leading to the formation of N6-(dimethylallyl)adenosine (i(6)A). The protein is tRNA dimethylallyltransferase of Bordetella parapertussis (strain 12822 / ATCC BAA-587 / NCTC 13253).